The primary structure comprises 212 residues: Deoxyribose-phosphate aldolase (212 aa).

Asp89 functions as the Proton donor/acceptor in the catalytic mechanism. The Schiff-base intermediate with acetaldehyde role is filled by Lys151. Lys180 serves as the catalytic Proton donor/acceptor.

The protein belongs to the DeoC/FbaB aldolase family. DeoC type 1 subfamily.

It is found in the cytoplasm. The enzyme catalyses 2-deoxy-D-ribose 5-phosphate = D-glyceraldehyde 3-phosphate + acetaldehyde. It functions in the pathway carbohydrate degradation; 2-deoxy-D-ribose 1-phosphate degradation; D-glyceraldehyde 3-phosphate and acetaldehyde from 2-deoxy-alpha-D-ribose 1-phosphate: step 2/2. Catalyzes a reversible aldol reaction between acetaldehyde and D-glyceraldehyde 3-phosphate to generate 2-deoxy-D-ribose 5-phosphate. The protein is Deoxyribose-phosphate aldolase of Clostridium botulinum (strain Kyoto / Type A2).